A 526-amino-acid polypeptide reads, in one-letter code: MAAFGIATGGSNWFSALALGVTLLKCLLIPTYHSTDFEVHRNWLAITHSLPISQWYYEATSEWTLDYPPFFAWFEYALSHVAKYFDQEMLNVRNLNYSSSRTLLFQRFSVIFTDALFVYAVHECCKCIDGKKAGKELTEKPKFILSALLLWNFGLLIVDHIHFQYNGFLSGLMLLSIARFFQKRHMEGAFLFAVLLHFKHIYLYVAPAYGVYLLRSYCFTANKQDGSIRWNSFSFVRLISLGLIVFLVSALSLGPFLALNQLPQVFSRLFPFKRGLCHAYWAPNFWALYSAFDKVLSVIGLELKLLDPNKIPKASMTSGLVQQFQHTVLPSVTPLATFICTLIAMLPSVFCLWCKPQGPRGFLRCLILCALSSFMFGWHVHEKAILLAVLPMSLLSVGKAVDASIFLILTTTGHYSPFPLLFTAPELPIKIILMLLFTIYSISSLKTLFRKEKPLFNWMETFYLLGLGPLEVFCEFVFPFTSWNLKYPFIPLLLTSVYCAVGITYAWLKLYVSVLIDPPVGKTKKQ.

11 consecutive transmembrane segments (helical) span residues Phe4–Leu24, Leu103–His122, Phe143–Phe163, Gly188–Ala208, Leu238–Ala258, Pro334–Cys354, Leu368–Ala388, Val389–Leu409, Leu427–Phe449, Thr461–Thr481, and Pro488–Leu508.

Belongs to the ALG6/ALG8 glucosyltransferase family.

The protein localises to the endoplasmic reticulum membrane. It catalyses the reaction an alpha-D-Glc-(1-&gt;3)-alpha-D-Man-(1-&gt;2)-alpha-D-Man-(1-&gt;2)-alpha-D-Man-(1-&gt;3)-[alpha-D-Man-(1-&gt;2)-alpha-D-Man-(1-&gt;3)-[alpha-D-Man-(1-&gt;2)-alpha-D-Man-(1-&gt;6)]-alpha-D-Man-(1-&gt;6)]-beta-D-Man-(1-&gt;4)-beta-D-GlcNAc-(1-&gt;4)-alpha-D-GlcNAc-diphospho-di-trans,poly-cis-dolichol + a di-trans,poly-cis-dolichyl beta-D-glucosyl phosphate = an alpha-D-Glc-(1-&gt;3)-alpha-D-Glc-(1-&gt;3)-alpha-D-Man-(1-&gt;2)-alpha-D-Man-(1-&gt;2)-alpha-D-Man-(1-&gt;3)-[alpha-D-Man-(1-&gt;2)-alpha-D-Man-(1-&gt;3)-[alpha-D-Man-(1-&gt;2)-alpha-D-Man-(1-&gt;6)]-alpha-D-Man-(1-&gt;6)]-beta-D-Man-(1-&gt;4)-beta-D-GlcNAc-(1-&gt;4)-alpha-D-GlcNAc-diphospho-di-trans,poly-cis-dolichol + a di-trans,poly-cis-dolichyl phosphate + H(+). Its pathway is protein modification; protein glycosylation. Functionally, dolichyl pyrophosphate Glc1Man9GlcNAc2 alpha-1,3-glucosyltransferase that operates in the biosynthetic pathway of dolichol-linked oligosaccharides, the glycan precursors employed in protein asparagine (N)-glycosylation. The assembly of dolichol-linked oligosaccharides begins on the cytosolic side of the endoplasmic reticulum membrane and finishes in its lumen. The sequential addition of sugars to dolichol pyrophosphate produces dolichol-linked oligosaccharides containing fourteen sugars, including two GlcNAcs, nine mannoses and three glucoses. Once assembled, the oligosaccharide is transferred from the lipid to nascent proteins by oligosaccharyltransferases. In the lumen of the endoplasmic reticulum, adds the second glucose residue from dolichyl phosphate glucose (Dol-P-Glc) onto the lipid-linked oligosaccharide intermediate Glc(1)Man(9)GlcNAc(2)-PP-Dol to produce Glc(2)Man(9)GlcNAc(2)-PP-Dol. Glc(2)Man(9)GlcNAc(2)-PP-Dol is a substrate for ALG10, the following enzyme in the biosynthetic pathway. Required for PKD1/Polycystin-1 maturation and localization to the plasma membrane of the primary cilia. This chain is Dolichyl pyrophosphate Glc1Man9GlcNAc2 alpha-1,3-glucosyltransferase, found in Bos taurus (Bovine).